The following is a 656-amino-acid chain: Threonine--tRNA ligase (656 aa).

In terms of domain architecture, TGS spans 1 to 63 (MAEIQLTFPD…LEDGAIEIIT (63 aa)). The tract at residues 243–541 (DHRVIGNQLD…LTEIYKGAFP (299 aa)) is catalytic. Positions 337, 388, and 518 each coordinate Zn(2+).

It belongs to the class-II aminoacyl-tRNA synthetase family. In terms of assembly, homodimer. Zn(2+) serves as cofactor.

Its subcellular location is the cytoplasm. It carries out the reaction tRNA(Thr) + L-threonine + ATP = L-threonyl-tRNA(Thr) + AMP + diphosphate + H(+). Its function is as follows. Catalyzes the attachment of threonine to tRNA(Thr) in a two-step reaction: L-threonine is first activated by ATP to form Thr-AMP and then transferred to the acceptor end of tRNA(Thr). Also edits incorrectly charged L-seryl-tRNA(Thr). The protein is Threonine--tRNA ligase of Latilactobacillus sakei subsp. sakei (strain 23K) (Lactobacillus sakei subsp. sakei).